The sequence spans 128 residues: Large ribosomal subunit protein bL17 (128 aa).

The protein belongs to the bacterial ribosomal protein bL17 family. As to quaternary structure, part of the 50S ribosomal subunit. Contacts protein L32.

In Streptococcus mutans serotype c (strain ATCC 700610 / UA159), this protein is Large ribosomal subunit protein bL17.